The following is a 486-amino-acid chain: Betaine aldehyde dehydrogenase (486 aa).

K(+)-binding residues include threonine 23 and aspartate 90. 147–149 (GAW) contributes to the NAD(+) binding site. Lysine 159 acts as the Charge relay system in catalysis. NAD(+) is bound by residues 173-176 (KPSE) and 226-229 (ESGT). Residue leucine 241 coordinates K(+). Glutamate 247 serves as the catalytic Proton acceptor. Residues glycine 249, cysteine 281, and glutamate 382 each coordinate NAD(+). Cysteine 281 acts as the Nucleophile in catalysis. Cysteine 281 is modified (cysteine sulfenic acid (-SOH)). 2 residues coordinate K(+): lysine 452 and glycine 455. Glutamate 459 serves as the catalytic Charge relay system.

Belongs to the aldehyde dehydrogenase family. As to quaternary structure, dimer of dimers. Requires K(+) as cofactor.

The catalysed reaction is betaine aldehyde + NAD(+) + H2O = glycine betaine + NADH + 2 H(+). It participates in amine and polyamine biosynthesis; betaine biosynthesis via choline pathway; betaine from betaine aldehyde: step 1/1. Functionally, involved in the biosynthesis of the osmoprotectant glycine betaine. Catalyzes the irreversible oxidation of betaine aldehyde to the corresponding acid. The polypeptide is Betaine aldehyde dehydrogenase (Vibrio parahaemolyticus serotype O3:K6 (strain RIMD 2210633)).